A 155-amino-acid polypeptide reads, in one-letter code: 6,7-dimethyl-8-ribityllumazine synthase (155 aa).

5-amino-6-(D-ribitylamino)uracil is bound by residues phenylalanine 23, 57–59, and 81–83; these read AFE and AVI. 86 to 87 lines the (2S)-2-hydroxy-3-oxobutyl phosphate pocket; it reads AT. Histidine 89 serves as the catalytic Proton donor. Residue phenylalanine 114 participates in 5-amino-6-(D-ribitylamino)uracil binding. A (2S)-2-hydroxy-3-oxobutyl phosphate-binding site is contributed by arginine 128.

It belongs to the DMRL synthase family.

It carries out the reaction (2S)-2-hydroxy-3-oxobutyl phosphate + 5-amino-6-(D-ribitylamino)uracil = 6,7-dimethyl-8-(1-D-ribityl)lumazine + phosphate + 2 H2O + H(+). It functions in the pathway cofactor biosynthesis; riboflavin biosynthesis; riboflavin from 2-hydroxy-3-oxobutyl phosphate and 5-amino-6-(D-ribitylamino)uracil: step 1/2. Functionally, catalyzes the formation of 6,7-dimethyl-8-ribityllumazine by condensation of 5-amino-6-(D-ribitylamino)uracil with 3,4-dihydroxy-2-butanone 4-phosphate. This is the penultimate step in the biosynthesis of riboflavin. In Geotalea daltonii (strain DSM 22248 / JCM 15807 / FRC-32) (Geobacter daltonii), this protein is 6,7-dimethyl-8-ribityllumazine synthase.